A 373-amino-acid chain; its full sequence is Lipoyl synthase (373 aa).

The disordered stretch occupies residues 14–36 (VSNDHPSSSPLQPGVKQSGEDKI). [4Fe-4S] cluster is bound by residues cysteine 81, cysteine 86, cysteine 92, cysteine 107, cysteine 111, cysteine 114, and serine 323. The Radical SAM core domain occupies 93–312 (FSHGTATFMI…EEYGMALGFS (220 aa)). The interval 346-373 (PAVSSTEHRERNTIASKSASKTESIHHR) is disordered. Residues 358 to 367 (TIASKSASKT) show a composition bias toward polar residues.

This sequence belongs to the radical SAM superfamily. Lipoyl synthase family. [4Fe-4S] cluster is required as a cofactor.

It is found in the cytoplasm. The enzyme catalyses [[Fe-S] cluster scaffold protein carrying a second [4Fe-4S](2+) cluster] + N(6)-octanoyl-L-lysyl-[protein] + 2 oxidized [2Fe-2S]-[ferredoxin] + 2 S-adenosyl-L-methionine + 4 H(+) = [[Fe-S] cluster scaffold protein] + N(6)-[(R)-dihydrolipoyl]-L-lysyl-[protein] + 4 Fe(3+) + 2 hydrogen sulfide + 2 5'-deoxyadenosine + 2 L-methionine + 2 reduced [2Fe-2S]-[ferredoxin]. Its pathway is protein modification; protein lipoylation via endogenous pathway; protein N(6)-(lipoyl)lysine from octanoyl-[acyl-carrier-protein]: step 2/2. Functionally, catalyzes the radical-mediated insertion of two sulfur atoms into the C-6 and C-8 positions of the octanoyl moiety bound to the lipoyl domains of lipoate-dependent enzymes, thereby converting the octanoylated domains into lipoylated derivatives. In Xylella fastidiosa (strain M23), this protein is Lipoyl synthase.